A 534-amino-acid chain; its full sequence is Probable alanine aminotransferase, mitochondrial (534 aa).

The transit peptide at 1 to 18 directs the protein to the mitochondrion; it reads MFKRSLKVLLSNPPINRV. An N6-(pyridoxal phosphate)lysine modification is found at Lys352.

It belongs to the class-I pyridoxal-phosphate-dependent aminotransferase family. Alanine aminotransferase subfamily. Homodimer. The cofactor is pyridoxal 5'-phosphate.

Its subcellular location is the mitochondrion matrix. The enzyme catalyses L-alanine + 2-oxoglutarate = pyruvate + L-glutamate. Its pathway is amino-acid degradation; L-alanine degradation via transaminase pathway; pyruvate from L-alanine: step 1/1. This Dictyostelium discoideum (Social amoeba) protein is Probable alanine aminotransferase, mitochondrial (gpt).